Reading from the N-terminus, the 304-residue chain is E3 ubiquitin-protein ligase CHIP (304 aa).

The segment covering 1–10 (MKGKEEKEGG) has biased composition (basic and acidic residues). The disordered stretch occupies residues 1–30 (MKGKEEKEGGARLGTGGGGSPDKSPSAQEL). Residue Lys-2 forms a Glycyl lysine isopeptide (Lys-Gly) (interchain with G-Cter in ubiquitin) linkage. A compositionally biased stretch (gly residues) spans 11–20 (ARLGTGGGGS). Residue Ser-20 is modified to Phosphoserine. Lys-23 is covalently cross-linked (Glycyl lysine isopeptide (Lys-Gly) (interchain with G-Cter in ubiquitin)). A phosphoserine mark is found at Ser-24 and Ser-26. TPR repeat units follow at residues 27–60 (AQEL…NPLV), 61–94 (AVYY…DGQS), and 96–128 (KAHF…AKEQ). A required for interaction with MAPK7 region spans residues 102–201 (GQCQLEMESY…GHIRAQQACI (100 aa)). A required for interaction with and ubiquitination of MYOCD region spans residues 143–197 (AKKKRWNSIEERRIHQESELHSYLTRLIAAERERELEECQRNHEGHEDDGHIRAQ). The tract at residues 144-198 (KKKRWNSIEERRIHQESELHSYLTRLIAAERERELEECQRNHEGHEDDGHIRAQQ) is required for interaction with FOXO1. The segment at 144–304 (KKKRWNSIEE…ISENGWVEDY (161 aa)) is required for ubiquitination of FOXO1. At Ser-150 the chain carries Phosphoserine. Glycyl lysine isopeptide (Lys-Gly) (interchain with G-Cter in ubiquitin) cross-links involve residues Lys-222 and Lys-256. The 75-residue stretch at 227-301 (DIPDYLCGKI…DAFISENGWV (75 aa)) folds into the U-box domain. Ser-274 is modified (phosphoserine).

Homodimer. Interacts with BAG2, and with the E2 ubiquitin conjugating enzymes UBE2D1, UBE2D2 and UBE2D3. Detected in a ternary complex containing STUB1, HSPA1A and HSPBP1. Part of a complex composed of STUB1/CHIP, VCP/p97, CHRNA3, and UBXN2A that modulates the ubiquitination and endoplasmic reticulum-associated degradation (ERAD) of CHRNA3. Within the complex UBXN2A acts as a scaffold protein required for the interaction of CHRNA3 with VCP/p97, this interaction also inhibits CHRNA3 ubiquitination by STUB1/CHIP and subsequently ERAD. Interacts with MKKS. Interacts with DNAAF4. Interacts (via the U-box domain) with the UBE2V2-UBE2N heterodimer; the complex has a specific 'Lys-63'-linked polyubiquitination activity. Interacts (when monoubiquitinated) with ATXN3. Interacts with UBE2W. Interacts with DNAJB6. Interacts with FLCN and HSP90AA1. Interacts with HSP90. Interacts with UBE2N and UBE2V1. Interacts (via TPR repeats) with HSPA8 (via C-terminus). Interacts (via TPR repeats) with HSPA1A (via C-terminus). Interacts with the non-acetylated form of HSPA1A and HSPA1B. Interacts with SMAD3 and HSP90AB1. Interacts with UBE4B. Interacts with PRMT5. Interacts with MYOCD (via C-terminus). Interacts with FOXO1 (when phosphorylated on 'Ser-253'). Interacts with MAPK7/ERK5; the interaction is enhanced in the presence of IGF1 or MAP2K5 and promotes STUB1/CHIP E3 ligase activity. Interacts with and ubiquitinates ESR1; the interaction is promoted in the absence of estradiol (17-beta-estradiol/E2). Interacts with ESR2. Interacts with and ubiquitinates NFATC3; HSPA1A/HSP70 is required as a co-chaperone. In macrophages, interacts with PAQR3; the interaction promotes PPARG poylubiquitination and STUB1-mediated degradation. Component of the chaperone-assisted selective autophagy (CASA) complex consisting of BAG3, HSPA8/HSC70, HSPB8 and STUB1/CHIP. In terms of processing, auto-ubiquitinated; mediated by UBE2D1 and UBE2D2 and enhanced in the presence of MAP2K5. Monoubiquitinated at Lys-2 following cell stress by UBE2W, promoting the interaction with ATXN3. Expressed in the brain.

Its subcellular location is the cytoplasm. The protein resides in the nucleus. It is found in the mitochondrion. It catalyses the reaction S-ubiquitinyl-[E2 ubiquitin-conjugating enzyme]-L-cysteine + [acceptor protein]-L-lysine = [E2 ubiquitin-conjugating enzyme]-L-cysteine + N(6)-ubiquitinyl-[acceptor protein]-L-lysine.. The protein operates within protein modification; protein ubiquitination. Functionally, E3 ubiquitin-protein ligase which targets misfolded chaperone substrates towards proteasomal degradation. Plays a role in the maintenance of mitochondrial morphology and promotes mitophagic removal of dysfunctional mitochondria; thereby acts as a protector against apoptosis in response to cellular stress. Negatively regulates vascular smooth muscle contraction, via degradation of the transcriptional activator MYOCD and subsequent loss of transcription of genes involved in vascular smooth muscle contraction. Promotes survival and proliferation of cardiac smooth muscle cells via ubiquitination and degradation of FOXO1, resulting in subsequent repression of FOXO1-mediated transcription of pro-apoptotic genes. Ubiquitinates ICER-type isoforms of CREM and targets them for proteasomal degradation, thereby acts as a positive effector of MAPK/ERK-mediated inhibition of apoptosis in cardiomyocytes. Inhibits lipopolysaccharide-induced apoptosis and hypertrophy in cardiomyocytes, via ubiquitination and subsequent proteasomal degradation of NFATC3. Collaborates with ATXN3 in the degradation of misfolded chaperone substrates: ATXN3 restricting the length of ubiquitin chain attached to STUB1/CHIP substrates and preventing further chain extension. Ubiquitinates NOS1 in concert with Hsp70 and Hsp40. Modulates the activity of several chaperone complexes, including Hsp70, Hsc70 and Hsp90. Ubiquitinates CHRNA3 targeting it for endoplasmic reticulum-associated degradation in cortical neurons, as part of the STUB1-VCP-UBXN2A complex. Ubiquitinates and promotes ESR1 proteasomal degradation in response to age-related circulating estradiol (17-beta-estradiol/E2) decline, thereby promotes neuronal apoptosis in response to ischemic reperfusion injury. Mediates transfer of non-canonical short ubiquitin chains to HSPA8 that have no effect on HSPA8 degradation. Mediates polyubiquitination of DNA polymerase beta (POLB) at 'Lys-41', 'Lys-61' and 'Lys-81', thereby playing a role in base-excision repair: catalyzes polyubiquitination by amplifying the HUWE1/ARF-BP1-dependent monoubiquitination and leading to POLB-degradation by the proteasome. Mediates polyubiquitination of CYP3A4. Ubiquitinates EPHA2 and may regulate the receptor stability and activity through proteasomal degradation. Acts as a co-chaperone for HSPA1A and HSPA1B chaperone proteins and promotes ubiquitin-mediated protein degradation. Negatively regulates the suppressive function of regulatory T-cells (Treg) during inflammation by mediating the ubiquitination and degradation of FOXP3 in a HSPA1A/B-dependent manner. Catalyzes monoubiquitination of SIRT6, preventing its degradation by the proteasome. Likely mediates polyubiquitination and down-regulates plasma membrane expression of PD-L1/CD274, an immune inhibitory ligand critical for immune tolerance to self and antitumor immunity. Negatively regulates TGF-beta signaling by modulating the basal level of SMAD3 via ubiquitin-mediated degradation. Plays a role in the degradation of TP53. Mediates ubiquitination of RIPK3 leading to its subsequent proteasome-dependent degradation. May regulate myosin assembly in striated muscles together with UBE4B and VCP/p97 by targeting myosin chaperone UNC45B for proteasomal degradation. Ubiquitinates PPARG in macrophages playing a role in M2 macrophages polarization and angiogenesis. The sequence is that of E3 ubiquitin-protein ligase CHIP from Mus musculus (Mouse).